Consider the following 311-residue polypeptide: Porphobilinogen deaminase (311 aa).

Cysteine 241 is subject to S-(dipyrrolylmethanemethyl)cysteine.

Belongs to the HMBS family. Monomer. Dipyrromethane serves as cofactor.

The catalysed reaction is 4 porphobilinogen + H2O = hydroxymethylbilane + 4 NH4(+). It participates in porphyrin-containing compound metabolism; protoporphyrin-IX biosynthesis; coproporphyrinogen-III from 5-aminolevulinate: step 2/4. In terms of biological role, tetrapolymerization of the monopyrrole PBG into the hydroxymethylbilane pre-uroporphyrinogen in several discrete steps. This Carboxydothermus hydrogenoformans (strain ATCC BAA-161 / DSM 6008 / Z-2901) protein is Porphobilinogen deaminase.